The sequence spans 206 residues: Putative type I restriction enzyme MpnIIP endonuclease subunit C-terminal part (206 aa).

The C-terminal section of a putative type I restriction enzyme that if reconstituted might recognize 5'-GAN(7)TAY-3' and cleave a random distance away. Subunit R is required for both nuclease and ATPase activities, but not for modification. The sequence is that of Putative type I restriction enzyme MpnIIP endonuclease subunit C-terminal part from Mycoplasma pneumoniae (strain ATCC 29342 / M129 / Subtype 1) (Mycoplasmoides pneumoniae).